The primary structure comprises 266 residues: 5'-nucleotidase SurE (266 aa).

Residues aspartate 8, aspartate 9, serine 39, and asparagine 93 each contribute to the a divalent metal cation site.

The protein belongs to the SurE nucleotidase family. Requires a divalent metal cation as cofactor.

Its subcellular location is the cytoplasm. It catalyses the reaction a ribonucleoside 5'-phosphate + H2O = a ribonucleoside + phosphate. In terms of biological role, nucleotidase that shows phosphatase activity on nucleoside 5'-monophosphates. This is 5'-nucleotidase SurE from Pyrobaculum arsenaticum (strain DSM 13514 / JCM 11321 / PZ6).